Here is a 492-residue protein sequence, read N- to C-terminus: Prostaglandin E2 receptor EP4 subtype (492 aa).

Residues 1–19 (MSIPGTNASSSQASNPLNS) lie on the Extracellular side of the membrane. A glycan (N-linked (GlcNAc...) asparagine) is linked at Asn-7. The chain crosses the membrane as a helical span at residues 20 to 43 (PVTIPAVMFIFGVVGNLVAIVVLC). At 44 to 55 (KSRKEQKETTFY) the chain is on the cytoplasmic side. Residues 56–79 (TLVCGLAVTDLLGTLLVSPVTIAT) traverse the membrane as a helical segment. Over 80-96 (YLKGQWPGGHALCEYST) the chain is Extracellular. A disulfide bridge connects residues Cys-92 and Cys-170. Residues 97 to 115 (FILLFFGLSGLSIICAMSI) traverse the membrane as a helical segment. Topologically, residues 116–135 (ERYLAINHAYFYSHYVDKRL) are cytoplasmic. A helical membrane pass occupies residues 136 to 160 (AGLTLFAVYASNVLFCALPSMGLGS). Over 161–184 (SRLQYPATWCFIDWTTNVTAHAAF) the chain is Extracellular. A helical transmembrane segment spans residues 185 to 211 (SYMYAGFSSFLILATVLCNVLVCGALL). Over 212 to 273 (RMHRQFMRRT…RSFRRIAGAE (62 aa)) the chain is Cytoplasmic. A helical transmembrane segment spans residues 274–301 (IQMVILLIATSLVVLICSIPLVVRVFVN). Topologically, residues 302–318 (QLYRPQLEPVIGKNPDL) are extracellular. Residues 319-338 (QAIRIASVSPILDPWIYILL) traverse the membrane as a helical segment. Residues 339–492 (RKTVLSKAIE…ETLNLSEKCI (154 aa)) lie on the Cytoplasmic side of the membrane. The span at 361 to 374 (RRERSGPHCSDSRR) shows a compositional bias: basic and acidic residues. Positions 361–383 (RRERSGPHCSDSRRTSSAVSGHS) are disordered. Residues Ser-380, Ser-383, Ser-385, and Ser-388 each carry the phosphoserine modification.

Belongs to the G-protein coupled receptor 1 family. In terms of assembly, interacts with FEM1A. Phosphorylation mediates agonist-mediated desensitization by promoting cytoplasmic retention.

Its subcellular location is the cell membrane. Receptor for prostaglandin E2 (PGE2). The activity of this receptor is mediated by G(s) proteins that stimulate adenylate cyclase. Has a relaxing effect on smooth muscle. May play an important role in regulating renal hemodynamics, intestinal epithelial transport, adrenal aldosterone secretion, and uterine function. In Bos taurus (Bovine), this protein is Prostaglandin E2 receptor EP4 subtype (PTGER4).